The following is a 241-amino-acid chain: DnaJ homolog subfamily C member 4 (241 aa).

Residues 34-99 (TYYELLGVHP…QSRRSYDDQL (66 aa)) form the J domain. The span at 88-99 (REQSRRSYDDQL) shows a compositional bias: basic and acidic residues. Residues 88 to 129 (REQSRRSYDDQLRSGSPPKSPRTTVHDKSAHQTHSSWTPPNA) form a disordered region. A compositionally biased stretch (polar residues) spans 119–129 (QTHSSWTPPNA). The helical transmembrane segment at 156–175 (VLGYCLLLMLAGMGLHYIAF) threads the bilayer. A disordered region spans residues 212 to 241 (QQERQRLGQRQPPPSEPTQGPEIVPRGAGP).

It is found in the membrane. In Homo sapiens (Human), this protein is DnaJ homolog subfamily C member 4 (DNAJC4).